The sequence spans 77 residues: Acyl carrier protein (77 aa).

The region spanning Met-1–Glu-76 is the Carrier domain. An O-(pantetheine 4'-phosphoryl)serine modification is found at Ser-36.

This sequence belongs to the acyl carrier protein (ACP) family. In terms of processing, 4'-phosphopantetheine is transferred from CoA to a specific serine of apo-ACP by AcpS. This modification is essential for activity because fatty acids are bound in thioester linkage to the sulfhydryl of the prosthetic group.

It is found in the cytoplasm. Its pathway is lipid metabolism; fatty acid biosynthesis. Its function is as follows. Carrier of the growing fatty acid chain in fatty acid biosynthesis. The chain is Acyl carrier protein from Staphylococcus saprophyticus subsp. saprophyticus (strain ATCC 15305 / DSM 20229 / NCIMB 8711 / NCTC 7292 / S-41).